The following is a 32-amino-acid chain: uncharacterized protein (32 aa).

This is an uncharacterized protein from Treponema pallidum (strain Nichols).